Consider the following 65-residue polypeptide: Small, acid-soluble spore protein H 1 (65 aa).

The protein belongs to the SspH family.

It localises to the spore core. This Clostridium botulinum (strain Langeland / NCTC 10281 / Type F) protein is Small, acid-soluble spore protein H 1.